The chain runs to 110 residues: U9-agatoxin-Ao1a (110 aa).

The signal sequence occupies residues Met-1–Ala-17. Residues Glu-18 to Arg-38 constitute a propeptide that is removed on maturation. Cystine bridges form between Cys-40-Cys-54, Cys-47-Cys-60, Cys-51-Cys-87, Cys-53-Cys-72, and Cys-62-Cys-70.

The protein belongs to the neurotoxin 37 family. As to expression, expressed by the venom gland.

It is found in the secreted. The polypeptide is U9-agatoxin-Ao1a (Agelena orientalis (Funnel-web spider)).